Here is a 215-residue protein sequence, read N- to C-terminus: Ras-related protein Rab-5B (215 aa).

GTP is bound by residues Ser-29, Ala-30, Gly-32, Lys-33, Ser-34, Ser-35, His-46, Glu-47, Thr-52, Gly-78, Asn-133, Lys-134, Asp-136, Ala-164, and Lys-165. Ser-34 is a Mg(2+) binding site. 2 consecutive short sequence motifs (switch) follow at residues 44 to 56 and 77 to 93; these read QFHE…IGAA and AGQE…YRGA. Position 52 (Thr-52) interacts with Mg(2+). The interval 184–215 is disordered; it reads SEPQSTSGAAGRSRGVDLHEQTQQNKSQCCSN. Residues 204-215 show a composition bias toward polar residues; sequence QTQQNKSQCCSN. S-geranylgeranyl cysteine attachment occurs at residues Cys-212 and Cys-213.

It belongs to the small GTPase superfamily. Rab family. Mg(2+) is required as a cofactor.

It localises to the cell membrane. The protein localises to the early endosome membrane. It catalyses the reaction GTP + H2O = GDP + phosphate + H(+). With respect to regulation, regulated by guanine nucleotide exchange factors (GEFs) which promote the exchange of bound GDP for free GTP. Regulated by GTPase activating proteins (GAPs) which increase the GTP hydrolysis activity. Inhibited by GDP dissociation inhibitors (GDIs). The small GTPases Rab are key regulators of intracellular membrane trafficking, from the formation of transport vesicles to their fusion with membranes. Rabs cycle between an inactive GDP-bound form and an active GTP-bound form that is able to recruit to membranes different sets of downstream effectors directly responsible for vesicle formation, movement, tethering and fusion. The polypeptide is Ras-related protein Rab-5B (RAB5B) (Gallus gallus (Chicken)).